We begin with the raw amino-acid sequence, 361 residues long: Deoxyribonuclease-2-beta (361 aa).

The signal sequence occupies residues 1–27 (MKQKMMARLLRTSFALLFLGLFGVLGA). N-linked (GlcNAc...) asparagine glycans are attached at residues Asn-81, Asn-103, Asn-119, and Asn-278.

This sequence belongs to the DNase II family. In terms of tissue distribution, highly expressed in the eye lens and in salivary gland. Detected at lower levels in lung, prostate and lymph node. Isoform 2 is lung specific.

It localises to the lysosome. It catalyses the reaction Endonucleolytic cleavage to nucleoside 3'-phosphates and 3'-phosphooligonucleotide end-products.. Hydrolyzes DNA under acidic conditions. Does not require divalent cations for activity. Participates in the degradation of nuclear DNA during lens cell differentiation. In Homo sapiens (Human), this protein is Deoxyribonuclease-2-beta (DNASE2B).